Here is a 97-residue protein sequence, read N- to C-terminus: YcgL domain-containing protein Maqu_1609 (97 aa).

The YcgL domain occupies 5-89 (EFVSVFRSSK…EQDTYIVDFK (85 aa)).

This chain is YcgL domain-containing protein Maqu_1609, found in Marinobacter nauticus (strain ATCC 700491 / DSM 11845 / VT8) (Marinobacter aquaeolei).